The primary structure comprises 1452 residues: Pleiotropic drug resistance protein 1 (1452 aa).

Positions 152-425 constitute an ABC transporter 1 domain; the sequence is LNYLHILPNR…FEYMGFICPE (274 aa). 185 to 192 is an ATP binding site; the sequence is GPPSSGKT. An ABC transmembrane type-2 1 domain is found at 504-716; it reads LLKACTAREY…AQNAIAVNEF (213 aa). 7 helical membrane-spanning segments follow: residues 521–541, 554–574, 609–629, 640–660, 664–684, 694–714, and 753–773; these read FVYI…MTLF, GAVF…NGFS, IPIT…VIGF, LLLL…MGAL, IIVA…MGGF, WWIW…IAVN, and IGAG…AVAL. The disordered stretch occupies residues 808–830; the sequence is LGKSSSEKGNDVRRSASSRSMSS. The segment covering 812–821 has biased composition (basic and acidic residues); that stretch reads SSEKGNDVRR. The region spanning 855–1107 is the ABC transporter 2 domain; that stretch reads ITFDDIRYAV…HLIKYFEGID (253 aa). Residue 900–907 participates in ATP binding; it reads GVSGAGKT. The region spanning 1180–1394 is the ABC transmembrane type-2 2 domain; sequence TQCMACFWKQ…TLYGLIASQF (215 aa). Transmembrane regions (helical) follow at residues 1199–1219, 1239–1259, 1287–1307, 1314–1334, 1344–1364, 1375–1395, and 1421–1441; these read YTAV…TIFW, YIAV…VIAI, LPYL…MIGF, FFWY…YGMM, IAAI…GFIV, WYYY…SQFG, and FVGY…FIFA.

It belongs to the ABC transporter superfamily. ABCG family. PDR (TC 3.A.1.205) subfamily. Expressed in root hypodermal passage cells. Expressed in stem tissues, particularly the vasculature and nodes adjacent to leaf axils.

The protein localises to the cell membrane. Cellular strigolactone (SL) transporter required for the exudation of SL from the root to the soil. The presence of SL in the vicinity of the roots is required for development of symbiotic interactions with arbuscular mycorrhizal fungi (AMF). Transports SL in the above ground tissues and is required for the control of shoot branching. SL regulates plant shoot architecture by inhibiting the outgrowth of axillary buds. Involved in the regulation of shootward and outward directional strigolactone transport in roots. Due to its polar localization in root cells, mediates directional shootward strigolactone transport, as well as localized outward directional transport for exudation to the soil. This Petunia axillaris (Large white petunia) protein is Pleiotropic drug resistance protein 1.